Consider the following 203-residue polypeptide: Urease accessory protein UreG (203 aa).

14–21 is a GTP binding site; that stretch reads GPVGSGKT.

It belongs to the SIMIBI class G3E GTPase family. UreG subfamily. In terms of assembly, homodimer. UreD, UreF and UreG form a complex that acts as a GTP-hydrolysis-dependent molecular chaperone, activating the urease apoprotein by helping to assemble the nickel containing metallocenter of UreC. The UreE protein probably delivers the nickel.

The protein localises to the cytoplasm. Facilitates the functional incorporation of the urease nickel metallocenter. This process requires GTP hydrolysis, probably effectuated by UreG. The sequence is that of Urease accessory protein UreG from Rhizobium meliloti (strain 1021) (Ensifer meliloti).